A 511-amino-acid chain; its full sequence is 2,3-bisphosphoglycerate-independent phosphoglycerate mutase (511 aa).

Mn(2+) is bound by residues D14 and S64. The active-site Phosphoserine intermediate is the S64. Residues H125, R155–D156, R187, R193, R259–R262, and K333 contribute to the substrate site. Mn(2+) is bound by residues D400, H404, D441, H442, and H460.

This sequence belongs to the BPG-independent phosphoglycerate mutase family. As to quaternary structure, monomer. Mn(2+) is required as a cofactor.

It carries out the reaction (2R)-2-phosphoglycerate = (2R)-3-phosphoglycerate. The protein operates within carbohydrate degradation; glycolysis; pyruvate from D-glyceraldehyde 3-phosphate: step 3/5. Catalyzes the interconversion of 2-phosphoglycerate and 3-phosphoglycerate. The sequence is that of 2,3-bisphosphoglycerate-independent phosphoglycerate mutase from Pseudomonas putida (strain GB-1).